The primary structure comprises 195 residues: Imidazoleglycerol-phosphate dehydratase (195 aa).

The protein belongs to the imidazoleglycerol-phosphate dehydratase family.

It is found in the cytoplasm. The enzyme catalyses D-erythro-1-(imidazol-4-yl)glycerol 3-phosphate = 3-(imidazol-4-yl)-2-oxopropyl phosphate + H2O. It functions in the pathway amino-acid biosynthesis; L-histidine biosynthesis; L-histidine from 5-phospho-alpha-D-ribose 1-diphosphate: step 6/9. This Thiobacillus denitrificans (strain ATCC 25259 / T1) protein is Imidazoleglycerol-phosphate dehydratase.